A 1414-amino-acid polypeptide reads, in one-letter code: Alpha-(1-&gt;3)-arabinofuranosyltransferase (1414 aa).

A run of 9 helical transmembrane segments spans residues 57-77, 81-101, 128-148, 167-187, 203-223, 273-293, 302-322, 352-372, and 389-409; these read YLFPHGTFFLLGDVLGVPGWV, LWWALLLTVGFWGVLRVAEAL, AISSETLPMMLAPWVLLPVIL, VALMGAVNAVATLTGCLAAVI, AWWLLCGALAVTWWVVALLML, STTAVLATTVVAAAGLAGLAL, LITMLLIGVVLLGLGYSGGLG, LPLALGLVHLLGRIPLPGSAP, and VAVAIVVLSALAAGTSLAWTA. Positions 687–845 constitute an F5/8 type C domain; the sequence is YPSDGADLVY…QYDASGFAHP (159 aa). Helical transmembrane passes span 1253–1273, 1297–1317, 1333–1353, and 1364–1384; these read VGLIGGLALLPLLALLALIPV, ALVAGTAISGVAGLLVVGAAM, VWDNVTVVVAAGGLILAGSVL, and YVGHTPGVQFLALLSVAFLAA. The segment at 1393–1414 is disordered; the sequence is PEPSEDGRSAKPEHTGASAHAG. The span at 1394–1406 shows a compositional bias: basic and acidic residues; it reads EPSEDGRSAKPEH.

The protein localises to the membrane. It carries out the reaction Adds an alpha-D-arabinofuranosyl group from trans,octacis-decaprenylphospho-beta-D-arabinofuranose at the 3-O-position of an alpha-(1-&gt;5)-arabinofuranan chain attached to a beta-(1-&gt;5)-galactofuranan chain.. Its pathway is cell wall biogenesis; cell wall polysaccharide biosynthesis. Involved in the biosynthesis of the arabinogalactan (AG) region of the mycolylarabinogalactan-peptidoglycan (mAGP) complex, an essential component of the mycobacterial cell wall. Catalyzes the addition of an arabinofuranosyl (Araf) residue from the sugar donor decaprenyl-phospho-arabinose (DPA) on the C-3 of an alpha-(1-&gt;5)-linked Araf from the arabinan backbone of AG. This Mycolicibacterium smegmatis (strain ATCC 700084 / mc(2)155) (Mycobacterium smegmatis) protein is Alpha-(1-&gt;3)-arabinofuranosyltransferase (aftD).